A 453-amino-acid polypeptide reads, in one-letter code: Phosphoglucosamine mutase (453 aa).

S110 serves as the catalytic Phosphoserine intermediate. 4 residues coordinate Mg(2+): S110, D248, D250, and D252. S110 is subject to Phosphoserine.

It belongs to the phosphohexose mutase family. It depends on Mg(2+) as a cofactor. In terms of processing, activated by phosphorylation.

It carries out the reaction alpha-D-glucosamine 1-phosphate = D-glucosamine 6-phosphate. Functionally, catalyzes the conversion of glucosamine-6-phosphate to glucosamine-1-phosphate. The chain is Phosphoglucosamine mutase from Mycolicibacterium smegmatis (strain ATCC 700084 / mc(2)155) (Mycobacterium smegmatis).